A 645-amino-acid polypeptide reads, in one-letter code: COP9 signalosome complex subunit 10 (645 aa).

The segment covering methionine 1 to aspartate 45 has biased composition (acidic residues). Positions methionine 1–glutamate 63 are disordered. A compositionally biased stretch (basic and acidic residues) spans aspartate 46–glutamate 63. The PCI domain maps to aspartate 348–lysine 543.

As to quaternary structure, component of a COP9 signalosome-like (CSN) complex, composed of at least RRI1/CSN5, CSN9, RRI2/CSN10, PCI8/CSN11, CSN12 and CSI1. In the complex, it probably interacts directly with CSN12.

It localises to the cytoplasm. Its subcellular location is the nucleus. Component of the COP9 signalosome (CSN) complex that acts as an regulator of the ubiquitin (Ubl) conjugation pathway by mediating the deneddylation of the cullin subunit of SCF-type E3 ubiquitin-protein ligase complexes. The CSN complex is involved in the regulation of the mating pheromone response. In Saccharomyces cerevisiae (strain ATCC 204508 / S288c) (Baker's yeast), this protein is COP9 signalosome complex subunit 10 (RRI2).